The chain runs to 377 residues: Signal peptide peptidase (377 aa).

Residues 1-27 (MDSALSDPHNGSAEAGGPTNSTTRPPS) form a disordered region. Residues 1–31 (MDSALSDPHNGSAEAGGPTNSTTRPPSTPEG) are Lumenal-facing. Asn-10 and Asn-20 each carry an N-linked (GlcNAc...) asparagine glycan. A helical transmembrane segment spans residues 32-52 (IALAYGSLLLMALLPIFFGAL). Over 53–77 (RSVRCARGKNASDMPETITSRDAAR) the chain is Cytoplasmic. The helical transmembrane segment at 78-98 (FPIIASCTLLGLYLFFKIFSQ) threads the bilayer. Topologically, residues 99–100 (EY) are lumenal. The chain crosses the membrane as a helical span at residues 101–121 (INLLLSMYFFVLGILALSHTI). Over 122 to 157 (SPFMNKFFPASFPNRQYQLLFTQGSGENKEEIINYE) the chain is Cytoplasmic. The helical transmembrane segment at 158 to 178 (FDTKDLVCLGLSSIVGVWYLL) threads the bilayer. Residues 179–181 (RKH) lie on the Lumenal side of the membrane. A helical transmembrane segment spans residues 182 to 202 (WIANNLFGLAFSLNGVELLHL). The Cytoplasmic segment spans residues 203-209 (NNVSTGC). A helical membrane pass occupies residues 210-230 (ILLGGLFIYDVFWVFGTNVMV). Asp-219 is a catalytic residue. Residues 231–256 (TVAKSFEAPIKLVFPQDLLEKGLEAN) are Lumenal-facing. The helical transmembrane segment at 257 to 277 (NFAMLGLGDVVIPGIFIALLL) threads the bilayer. Residue Asp-265 is part of the active site. Over 278 to 290 (RFDISLKKNTHTY) the chain is Cytoplasmic. Residues 291-311 (FYTSFAAYIFGLGLTIFIMHI) traverse the membrane as a helical segment. Topologically, residues 312-314 (FKH) are lumenal. A helical membrane pass occupies residues 315–335 (AQPALLYLVPACIGFPVLVAL). Positions 317–319 (PAL) match the PAL motif. The Cytoplasmic portion of the chain corresponds to 336–377 (AKGEVTEMFSYEESNPKDPAAVTESKEGTEASASKGLEKKEK). Positions 345 to 377 (SYEESNPKDPAAVTESKEGTEASASKGLEKKEK) are disordered. Ser-367 carries the phosphoserine modification.

This sequence belongs to the peptidase A22B family. Monomer. Homodimer. Interacts with RNF139. Interacts with DERL1 and XBP1 isoform 1. Post-translationally, N-glycosylated. In terms of tissue distribution, widely expressed with highest levels in kidney, liver, placenta, lung, leukocytes and small intestine and reduced expression in heart and skeletal muscle. Expressed abundantly in the CNS with highest levels in thalamus and medulla.

It localises to the endoplasmic reticulum membrane. The protein localises to the membrane. The protein resides in the cell membrane. Its function is as follows. Catalyzes intramembrane proteolysis of signal peptides that have been removed from precursors of secretory and membrane proteins, resulting in the release of the fragment from the ER membrane into the cytoplasm. Required to generate lymphocyte cell surface (HLA-E) epitopes derived from MHC class I signal peptides. May be necessary for the removal of the signal peptide that remains attached to the hepatitis C virus core protein after the initial proteolytic processing of the polyprotein. Involved in the intramembrane cleavage of the integral membrane protein PSEN1. Cleaves the integral membrane protein XBP1 isoform 1 in a DERL1/RNF139-dependent manner. May play a role in graft rejection. In Homo sapiens (Human), this protein is Signal peptide peptidase.